Consider the following 350-residue polypeptide: Ferrochelatase (350 aa).

Histidine 220 and glutamate 301 together coordinate Fe cation.

The protein belongs to the ferrochelatase family.

It localises to the cytoplasm. The enzyme catalyses heme b + 2 H(+) = protoporphyrin IX + Fe(2+). The protein operates within porphyrin-containing compound metabolism; protoheme biosynthesis; protoheme from protoporphyrin-IX: step 1/1. Catalyzes the ferrous insertion into protoporphyrin IX. The polypeptide is Ferrochelatase (Brucella anthropi (strain ATCC 49188 / DSM 6882 / CCUG 24695 / JCM 21032 / LMG 3331 / NBRC 15819 / NCTC 12168 / Alc 37) (Ochrobactrum anthropi)).